The sequence spans 495 residues: Type-1 histone deacetylase 1 (495 aa).

Asp94 provides a ligand contact to substrate. His136 (proton acceptor) is an active-site residue. A substrate-binding site is contributed by Gly144. A divalent metal cation is bound by residues Asp171, His173, and Asp259. Tyr298 is a binding site for substrate. Residues 372 to 495 (PAAAHHDIPP…EDADVDMDSG (124 aa)) are disordered. Residues 396-413 (DVRISEADRDKKVHHQGE) show a composition bias toward basic and acidic residues. Over residues 425 to 443 (NYSNGLEATSTSRRNQVSI) the composition is skewed to polar residues. A compositionally biased stretch (low complexity) spans 454–480 (NSRNNNNNNNNNNNNNNNNNNNSNNNN).

The protein belongs to the histone deacetylase family. HD type 1 subfamily.

It is found in the nucleus. Its subcellular location is the cytoplasm. The catalysed reaction is N(6)-acetyl-L-lysyl-[histone] + H2O = L-lysyl-[histone] + acetate. Functionally, responsible for the deacetylation of lysine residues on the N-terminal part of the core histones (H2A, H2B, H3 and H4). Histone deacetylation plays an important role in transcriptional regulation, cell cycle progression and developmental events. Histone deacetylases act via the formation of large multiprotein complexes. This chain is Type-1 histone deacetylase 1 (hdaA), found in Dictyostelium discoideum (Social amoeba).